A 292-amino-acid polypeptide reads, in one-letter code: 4-hydroxy-tetrahydrodipicolinate synthase (292 aa).

Residue Thr48 participates in pyruvate binding. Catalysis depends on Tyr136, which acts as the Proton donor/acceptor. Lys164 functions as the Schiff-base intermediate with substrate in the catalytic mechanism. Ile204 contributes to the pyruvate binding site.

This sequence belongs to the DapA family. Homotetramer; dimer of dimers.

Its subcellular location is the cytoplasm. The enzyme catalyses L-aspartate 4-semialdehyde + pyruvate = (2S,4S)-4-hydroxy-2,3,4,5-tetrahydrodipicolinate + H2O + H(+). It functions in the pathway amino-acid biosynthesis; L-lysine biosynthesis via DAP pathway; (S)-tetrahydrodipicolinate from L-aspartate: step 3/4. Functionally, catalyzes the condensation of (S)-aspartate-beta-semialdehyde [(S)-ASA] and pyruvate to 4-hydroxy-tetrahydrodipicolinate (HTPA). This Acetivibrio thermocellus (strain ATCC 27405 / DSM 1237 / JCM 9322 / NBRC 103400 / NCIMB 10682 / NRRL B-4536 / VPI 7372) (Clostridium thermocellum) protein is 4-hydroxy-tetrahydrodipicolinate synthase.